The primary structure comprises 195 residues: Heterogeneous nuclear ribonucleoprotein A/B (195 aa).

The interval 1–23 (EEVADGQAHGEXVYREEHHEGEK) is disordered. Residues 12–23 (XVYREEHHEGEK) are compositionally biased toward basic and acidic residues. The RRM domain occupies 32-48 (EETKLFVGALSWETTEK). An asymmetric dimethylarginine mark is found at arginine 119 and arginine 122. Serine 173 carries the post-translational modification Phosphoserine; by CK2.

Post-translationally, extensively phosphorylated on tyrosine residues.

It localises to the cytoplasm. The protein localises to the nucleus. Functionally, may regulate mRNA translation and stability. It binds to poly(A) and poly(U) regions of RNA. This binding is inhibited when the protein is phosphorylated. This chain is Heterogeneous nuclear ribonucleoprotein A/B, found in Artemia salina (Brine shrimp).